A 98-amino-acid chain; its full sequence is NADH-ubiquinone oxidoreductase chain 4L (98 aa).

Transmembrane regions (helical) follow at residues 2–22 (TPIF…TLIF), 29–49 (SLLC…LIIL), and 61–81 (ILLL…LVMV).

It belongs to the complex I subunit 4L family. In terms of assembly, core subunit of respiratory chain NADH dehydrogenase (Complex I) which is composed of 45 different subunits.

It is found in the mitochondrion inner membrane. It catalyses the reaction a ubiquinone + NADH + 5 H(+)(in) = a ubiquinol + NAD(+) + 4 H(+)(out). Core subunit of the mitochondrial membrane respiratory chain NADH dehydrogenase (Complex I) which catalyzes electron transfer from NADH through the respiratory chain, using ubiquinone as an electron acceptor. Part of the enzyme membrane arm which is embedded in the lipid bilayer and involved in proton translocation. The chain is NADH-ubiquinone oxidoreductase chain 4L (MT-ND4L) from Avahi cleesei (Cleese's woolly lemur).